The following is a 366-amino-acid chain: MRVDLFDFDLPEENIALRPANPRDSARLLVVDPNENRMEDHRVFDLPSFLRPGDALVFNDTRVIPAQLEGVRLREGAPETAVSATLHMRADQSRWKAFARPGKRIKEGDRIRFGYDRDTVNSSSGACGLAHLEATVEEKGEEGEITLLFDISGPVLDEAIASVGHIPLPPYIAAKRPEDQQDQTDYQTIYAREKGAVAAPTAGLHFTPDLFEALDSAGIERHFVTLHVGAGTFLPVKSDDTDDHKMHFEIGYVSQETADRLNAVKARGGRIVCVGTTSLRLIESAATEDGTIHPWSDATGIFITPGYRFRAVDMLMTNFHLPKSTLFMLVSAFCGLETMRDAYRHAIETGYRFYSYGDSSLLFRKN.

This sequence belongs to the QueA family. Monomer.

It localises to the cytoplasm. It carries out the reaction 7-aminomethyl-7-carbaguanosine(34) in tRNA + S-adenosyl-L-methionine = epoxyqueuosine(34) in tRNA + adenine + L-methionine + 2 H(+). Its pathway is tRNA modification; tRNA-queuosine biosynthesis. Functionally, transfers and isomerizes the ribose moiety from AdoMet to the 7-aminomethyl group of 7-deazaguanine (preQ1-tRNA) to give epoxyqueuosine (oQ-tRNA). The protein is S-adenosylmethionine:tRNA ribosyltransferase-isomerase of Agrobacterium fabrum (strain C58 / ATCC 33970) (Agrobacterium tumefaciens (strain C58)).